Consider the following 100-residue polypeptide: Urease subunit gamma (100 aa).

This sequence belongs to the urease gamma subunit family. In terms of assembly, heterotrimer of UreA (gamma), UreB (beta) and UreC (alpha) subunits. Three heterotrimers associate to form the active enzyme.

It localises to the cytoplasm. It catalyses the reaction urea + 2 H2O + H(+) = hydrogencarbonate + 2 NH4(+). The protein operates within nitrogen metabolism; urea degradation; CO(2) and NH(3) from urea (urease route): step 1/1. This is Urease subunit gamma from Saccharopolyspora erythraea (strain ATCC 11635 / DSM 40517 / JCM 4748 / NBRC 13426 / NCIMB 8594 / NRRL 2338).